A 133-amino-acid polypeptide reads, in one-letter code: uncharacterized protein (133 aa).

Residues 1–22 form the signal peptide; the sequence is MYRSSISIQVFICVLFLPLDSG. Asn111 carries N-linked (GlcNAc...) asparagine glycosylation.

The protein resides in the secreted. This is an uncharacterized protein from Saccharomyces cerevisiae (strain ATCC 204508 / S288c) (Baker's yeast).